Here is a 249-residue protein sequence, read N- to C-terminus: Ubiquinone biosynthesis O-methyltransferase (249 aa).

S-adenosyl-L-methionine is bound by residues R41, G72, D93, and M136.

It belongs to the methyltransferase superfamily. UbiG/COQ3 family.

It carries out the reaction a 3-demethylubiquinol + S-adenosyl-L-methionine = a ubiquinol + S-adenosyl-L-homocysteine + H(+). The catalysed reaction is a 3-(all-trans-polyprenyl)benzene-1,2-diol + S-adenosyl-L-methionine = a 2-methoxy-6-(all-trans-polyprenyl)phenol + S-adenosyl-L-homocysteine + H(+). It participates in cofactor biosynthesis; ubiquinone biosynthesis. O-methyltransferase that catalyzes the 2 O-methylation steps in the ubiquinone biosynthetic pathway. The chain is Ubiquinone biosynthesis O-methyltransferase from Mesorhizobium japonicum (strain LMG 29417 / CECT 9101 / MAFF 303099) (Mesorhizobium loti (strain MAFF 303099)).